Here is a 209-residue protein sequence, read N- to C-terminus: Large ribosomal subunit protein uL3 (209 aa).

Residues 133-152 (THGNSLSHRVPGSIGQNQTP) are disordered. Residue Q150 is modified to N5-methylglutamine.

The protein belongs to the universal ribosomal protein uL3 family. As to quaternary structure, part of the 50S ribosomal subunit. Forms a cluster with proteins L14 and L19. In terms of processing, methylated by PrmB.

In terms of biological role, one of the primary rRNA binding proteins, it binds directly near the 3'-end of the 23S rRNA, where it nucleates assembly of the 50S subunit. This chain is Large ribosomal subunit protein uL3, found in Shigella sonnei (strain Ss046).